A 520-amino-acid polypeptide reads, in one-letter code: GMP synthase [glutamine-hydrolyzing] (520 aa).

The region spanning 9-202 (TVLIVDFGSQ…VHNIAGIEGD (194 aa)) is the Glutamine amidotransferase type-1 domain. Cys-86 functions as the Nucleophile in the catalytic mechanism. Catalysis depends on residues His-176 and Glu-178. In terms of domain architecture, GMPS ATP-PPase spans 203–395 (WTMRAYREHA…LGLPESFIGR (193 aa)). An ATP-binding site is contributed by 230–236 (SGGVDSS).

In terms of assembly, homodimer.

It carries out the reaction XMP + L-glutamine + ATP + H2O = GMP + L-glutamate + AMP + diphosphate + 2 H(+). It functions in the pathway purine metabolism; GMP biosynthesis; GMP from XMP (L-Gln route): step 1/1. In terms of biological role, catalyzes the synthesis of GMP from XMP. The protein is GMP synthase [glutamine-hydrolyzing] of Mesorhizobium japonicum (strain LMG 29417 / CECT 9101 / MAFF 303099) (Mesorhizobium loti (strain MAFF 303099)).